Reading from the N-terminus, the 265-residue chain is Homeobox protein CDX-1 (265 aa).

A disordered region spans residues K9–T153. Over residues Y30 to Y42 the composition is skewed to pro residues. Residues A73 to F92 show a composition bias toward low complexity. Positions G93–G108 are enriched in pro residues. A compositionally biased stretch (low complexity) spans G110–G126. The homeobox DNA-binding region spans K154–N213. The interval Y157 to Y178 is interaction with DNA. Residues R196–A207 form an interaction with 5-mCpG DNA region. Positions A207–Q217 are enriched in basic residues. A disordered region spans residues A207 to P265. Polar residues predominate over residues P245–P256.

This sequence belongs to the Caudal homeobox family. As to expression, intestinal epithelium.

The protein localises to the nucleus. Functionally, plays a role in transcriptional regulation. Involved in activated KRAS-mediated transcriptional activation of PRKD1 in colorectal cancer (CRC) cells. Binds to the PRKD1 promoter in colorectal cancer (CRC) cells. Could play a role in the terminal differentiation of the intestine. Binds preferentially to methylated DNA. The chain is Homeobox protein CDX-1 (CDX1) from Homo sapiens (Human).